The sequence spans 80 residues: Acyl carrier protein (80 aa).

The Carrier domain occupies 4 to 79 (EEILQKVCSI…DAVKFIEEKK (76 aa)). S39 bears the O-(pantetheine 4'-phosphoryl)serine mark.

Belongs to the acyl carrier protein (ACP) family. In terms of processing, 4'-phosphopantetheine is transferred from CoA to a specific serine of apo-ACP by AcpS. This modification is essential for activity because fatty acids are bound in thioester linkage to the sulfhydryl of the prosthetic group.

It localises to the cytoplasm. It functions in the pathway lipid metabolism; fatty acid biosynthesis. Carrier of the growing fatty acid chain in fatty acid biosynthesis. This is Acyl carrier protein from Prochlorococcus marinus subsp. pastoris (strain CCMP1986 / NIES-2087 / MED4).